A 105-amino-acid polypeptide reads, in one-letter code: SAGA-associated factor 11 (105 aa).

Residues 76–97 (FRCPNCSRDLSANRFAAHLERC) form an SGF11-type zinc finger.

Belongs to the SGF11 family. Component of the 1.8 MDa SAGA transcription coactivator-HAT complex. SAGA is built of 5 distinct domains with specialized functions. Within the SAGA complex, SUS1, SGF11, SGF73 and UBP8 form an additional subcomplex of SAGA called the DUB module (deubiquitination module). Interacts directly with SGF73, SUS1 and UBP8.

It localises to the nucleus. In terms of biological role, functions as a component of the transcription regulatory histone acetylation (HAT) complex SAGA. At the promoters, SAGA is required for recruitment of the basal transcription machinery. It influences RNA polymerase II transcriptional activity through different activities such as TBP interaction and promoter selectivity, interaction with transcription activators, and chromatin modification through histone acetylation and deubiquitination. SAGA acetylates nucleosomal histone H3 to some extent (to form H3K9ac, H3K14ac, H3K18ac and H3K23ac). SAGA interacts with DNA via upstream activating sequences (UASs). Involved in transcriptional regulation of a subset of SAGA-regulated genes. Within the SAGA complex, participates in a subcomplex, that specifically deubiquitinates histones H2B. This is SAGA-associated factor 11 from Eremothecium gossypii (strain ATCC 10895 / CBS 109.51 / FGSC 9923 / NRRL Y-1056) (Yeast).